Reading from the N-terminus, the 444-residue chain is Enolase 2 (444 aa).

Residues histidine 165 and glutamate 174 each contribute to the substrate site. The Proton donor role is filled by glutamate 217. Positions 252, 303, and 330 each coordinate Mg(2+). The substrate site is built by glutamate 303 and aspartate 330. Catalysis depends on lysine 355, which acts as the Proton acceptor. Residues 382–385 (SHRS) and lysine 406 contribute to the substrate site.

It belongs to the enolase family. As to quaternary structure, homodimer. Requires Mg(2+) as cofactor.

The protein resides in the cytoplasm. It catalyses the reaction (2R)-2-phosphoglycerate = phosphoenolpyruvate + H2O. It functions in the pathway carbohydrate degradation; glycolysis; pyruvate from D-glyceraldehyde 3-phosphate: step 4/5. This is Enolase 2 (ENO2) from Toxoplasma gondii.